The following is a 308-amino-acid chain: Ribonuclease Z (308 aa).

Zn(2+)-binding residues include His-61, His-63, Asp-65, His-66, His-139, Asp-210, and His-268. Catalysis depends on Asp-65, which acts as the Proton acceptor.

The protein belongs to the RNase Z family. In terms of assembly, homodimer. The cofactor is Zn(2+).

It carries out the reaction Endonucleolytic cleavage of RNA, removing extra 3' nucleotides from tRNA precursor, generating 3' termini of tRNAs. A 3'-hydroxy group is left at the tRNA terminus and a 5'-phosphoryl group is left at the trailer molecule.. Its function is as follows. Zinc phosphodiesterase, which displays some tRNA 3'-processing endonuclease activity. Probably involved in tRNA maturation, by removing a 3'-trailer from precursor tRNA. The protein is Ribonuclease Z of Natronomonas pharaonis (strain ATCC 35678 / DSM 2160 / CIP 103997 / JCM 8858 / NBRC 14720 / NCIMB 2260 / Gabara) (Halobacterium pharaonis).